Reading from the N-terminus, the 99-residue chain is L-rhamnose mutarotase (99 aa).

Tyr-18 serves as a coordination point for substrate. His-22 serves as the catalytic Proton donor. Substrate contacts are provided by residues Tyr-41 and 76–77 (WW).

Belongs to the rhamnose mutarotase family. Homodimer.

It localises to the cytoplasm. It catalyses the reaction alpha-L-rhamnose = beta-L-rhamnose. Its pathway is carbohydrate metabolism; L-rhamnose metabolism. Involved in the anomeric conversion of L-rhamnose. This Shigella boydii serotype 18 (strain CDC 3083-94 / BS512) protein is L-rhamnose mutarotase.